The chain runs to 101 residues: Large ribosomal subunit protein uL24 (101 aa).

Belongs to the universal ribosomal protein uL24 family. Part of the 50S ribosomal subunit.

In terms of biological role, one of two assembly initiator proteins, it binds directly to the 5'-end of the 23S rRNA, where it nucleates assembly of the 50S subunit. Functionally, one of the proteins that surrounds the polypeptide exit tunnel on the outside of the subunit. This is Large ribosomal subunit protein uL24 from Borreliella burgdorferi (strain ATCC 35210 / DSM 4680 / CIP 102532 / B31) (Borrelia burgdorferi).